A 547-amino-acid chain; its full sequence is Chaperonin GroEL (547 aa).

Residues 29-32, 86-90, glycine 413, 479-481, and aspartate 495 contribute to the ATP site; these read TLGP, DGTTT, and NAA.

It belongs to the chaperonin (HSP60) family. In terms of assembly, forms a cylinder of 14 subunits composed of two heptameric rings stacked back-to-back. Interacts with the co-chaperonin GroES.

The protein resides in the cytoplasm. The enzyme catalyses ATP + H2O + a folded polypeptide = ADP + phosphate + an unfolded polypeptide.. Together with its co-chaperonin GroES, plays an essential role in assisting protein folding. The GroEL-GroES system forms a nano-cage that allows encapsulation of the non-native substrate proteins and provides a physical environment optimized to promote and accelerate protein folding. This chain is Chaperonin GroEL, found in Synechococcus sp. (strain RCC307).